Consider the following 431-residue polypeptide: Glucose-1-phosphate adenylyltransferase (431 aa).

K39 serves as a coordination point for beta-D-fructose 1,6-bisphosphate. AMP contacts are provided by R40, H46, and R52. Y114 lines the alpha-D-glucose 1-phosphate pocket. AMP is bound at residue R130. Residues G179, 194–195 (EK), and S212 each bind alpha-D-glucose 1-phosphate. E370 and R386 together coordinate AMP. Beta-D-fructose 1,6-bisphosphate is bound by residues 419–423 (REMLR) and 429–431 (QER).

The protein belongs to the bacterial/plant glucose-1-phosphate adenylyltransferase family. In terms of assembly, homotetramer.

The catalysed reaction is alpha-D-glucose 1-phosphate + ATP + H(+) = ADP-alpha-D-glucose + diphosphate. Its pathway is glycan biosynthesis; glycogen biosynthesis. With respect to regulation, allosterically activated by fructose-1,6-bisphosphate (F16BP) and inhibited by AMP. Its function is as follows. Involved in the biosynthesis of ADP-glucose, a building block required for the elongation reactions to produce glycogen. Catalyzes the reaction between ATP and alpha-D-glucose 1-phosphate (G1P) to produce pyrophosphate and ADP-Glc. The polypeptide is Glucose-1-phosphate adenylyltransferase (Salmonella paratyphi C (strain RKS4594)).